The chain runs to 212 residues: ATP synthase F(0) complex subunit a (212 aa).

6 helical membrane-spanning segments follow: residues 3 to 23, 58 to 78, 87 to 107, 128 to 148, 169 to 189, and 192 to 212; these read MMGIPLILIAIFLPTLLIYTS, WAAMLMTLMIXLLSMNLLGLL, QLSMNMALAIPLWLATVLTGL, IPLLIIIETVSLFIRPLALGV, FVLLPMMTLTALSTFIVLVLL, and LEIAVAMIQAYVFTLLLTLYL.

This sequence belongs to the ATPase A chain family. As to quaternary structure, component of the ATP synthase complex composed at least of ATP5F1A/subunit alpha, ATP5F1B/subunit beta, ATP5MC1/subunit c (homooctomer), MT-ATP6/subunit a, MT-ATP8/subunit 8, ATP5ME/subunit e, ATP5MF/subunit f, ATP5MG/subunit g, ATP5MK/subunit k, ATP5MJ/subunit j, ATP5F1C/subunit gamma, ATP5F1D/subunit delta, ATP5F1E/subunit epsilon, ATP5PF/subunit F6, ATP5PB/subunit b, ATP5PD/subunit d, ATP5PO/subunit OSCP. ATP synthase complex consists of a soluble F(1) head domain (subunits alpha(3) and beta(3)) - the catalytic core - and a membrane F(0) domain - the membrane proton channel (subunits c, a, 8, e, f, g, k and j). These two domains are linked by a central stalk (subunits gamma, delta, and epsilon) rotating inside the F1 region and a stationary peripheral stalk (subunits F6, b, d, and OSCP). Interacts with DNAJC30; interaction is direct.

The protein resides in the mitochondrion inner membrane. The catalysed reaction is H(+)(in) = H(+)(out). Functionally, subunit a, of the mitochondrial membrane ATP synthase complex (F(1)F(0) ATP synthase or Complex V) that produces ATP from ADP in the presence of a proton gradient across the membrane which is generated by electron transport complexes of the respiratory chain. ATP synthase complex consist of a soluble F(1) head domain - the catalytic core - and a membrane F(1) domain - the membrane proton channel. These two domains are linked by a central stalk rotating inside the F(1) region and a stationary peripheral stalk. During catalysis, ATP synthesis in the catalytic domain of F(1) is coupled via a rotary mechanism of the central stalk subunits to proton translocation. With the subunit c (ATP5MC1), forms the proton-conducting channel in the F(0) domain, that contains two crucial half-channels (inlet and outlet) that facilitate proton movement from the mitochondrial intermembrane space (IMS) into the matrix. Protons are taken up via the inlet half-channel and released through the outlet half-channel, following a Grotthuss mechanism. The protein is ATP synthase F(0) complex subunit a of Tropidurus hispidus (Peters' lava lizard).